The sequence spans 252 residues: Phosphoglycolate phosphatase (252 aa).

D13 (nucleophile) is an active-site residue. 3 residues coordinate Mg(2+): D13, D15, and D192.

This sequence belongs to the HAD-like hydrolase superfamily. CbbY/CbbZ/Gph/YieH family. As to quaternary structure, monomer. Requires Mg(2+) as cofactor. Chloride is required as a cofactor.

The catalysed reaction is 2-phosphoglycolate + H2O = glycolate + phosphate. The protein operates within organic acid metabolism; glycolate biosynthesis; glycolate from 2-phosphoglycolate: step 1/1. Specifically catalyzes the dephosphorylation of 2-phosphoglycolate. Is involved in the dissimilation of the intracellular 2-phosphoglycolate formed during the DNA repair of 3'-phosphoglycolate ends, a major class of DNA lesions induced by oxidative stress. The protein is Phosphoglycolate phosphatase of Salmonella typhi.